Consider the following 190-residue polypeptide: Glutathione peroxidase 2 (190 aa).

Sec-40 is an active-site residue. Residue Sec-40 is a non-standard amino acid, selenocysteine.

The protein belongs to the glutathione peroxidase family. As to quaternary structure, homotetramer.

Its subcellular location is the cytoplasm. The protein resides in the cytosol. It carries out the reaction 2 glutathione + H2O2 = glutathione disulfide + 2 H2O. The enzyme catalyses a hydroperoxy polyunsaturated fatty acid + 2 glutathione = a hydroxy polyunsaturated fatty acid + glutathione disulfide + H2O. The catalysed reaction is tert-butyl hydroperoxide + 2 glutathione = tert-butanol + glutathione disulfide + H2O. It catalyses the reaction cumene hydroperoxide + 2 glutathione = 2-phenylpropan-2-ol + glutathione disulfide + H2O. It carries out the reaction (13S)-hydroperoxy-(9Z,11E)-octadecadienoate + 2 glutathione = (13S)-hydroxy-(9Z,11E)-octadecadienoate + glutathione disulfide + H2O. The enzyme catalyses (5S)-hydroperoxy-(6E,8Z,11Z,14Z)-eicosatetraenoate + 2 glutathione = (5S)-hydroxy-(6E,8Z,11Z,14Z)-eicosatetraenoate + glutathione disulfide + H2O. The catalysed reaction is (12R)-hydroperoxy-(5Z,8Z,10E,14Z)-eicosatetraenoate + 2 glutathione = (12R)-hydroxy-(5Z,8Z,10E,14Z)-eicosatetraenoate + glutathione disulfide + H2O. It catalyses the reaction (15S)-hydroperoxy-(5Z,8Z,11Z,13E)-eicosatetraenoate + 2 glutathione = (15S)-hydroxy-(5Z,8Z,11Z,13E)-eicosatetraenoate + glutathione disulfide + H2O. Catalyzes the reduction of hydroperoxides in a glutathione-dependent manner thus regulating cellular redox homeostasis. Can reduce small soluble hydroperoxides such as H2O2, cumene hydroperoxide and tert-butyl hydroperoxide, as well as several fatty acid-derived hydroperoxides. Cannot reduce phosphatidycholine hydroperoxide. The protein is Glutathione peroxidase 2 (GPX2) of Pongo pygmaeus (Bornean orangutan).